The chain runs to 197 residues: Endoribonuclease YbeY (197 aa).

Positions 156, 160, and 166 each coordinate Zn(2+).

Belongs to the endoribonuclease YbeY family. It depends on Zn(2+) as a cofactor.

It localises to the cytoplasm. Its function is as follows. Single strand-specific metallo-endoribonuclease involved in late-stage 70S ribosome quality control and in maturation of the 3' terminus of the 16S rRNA. The chain is Endoribonuclease YbeY from Cupriavidus metallidurans (strain ATCC 43123 / DSM 2839 / NBRC 102507 / CH34) (Ralstonia metallidurans).